The primary structure comprises 541 residues: MESQRNILLIGLLFVSFLLWQQWQADKAPKPVATESSLVANAANSHSADVPEADTGVPAAVTATSKLITVKTDQLDVQINPIGGDIVFAALVSHKMEQDKDQPFVLLEQTKDFTYIAQSGLIGRDGIDSSAKGRAAFSTAATEYTLAEGQDTLEVPLTYVADNGVTYTKVFVFHRGKFNVDVDYKINNTSAAPLQVQMYGQIKQTIKPSESSMVMPTYRGGAFSTQDVRYEKYKFDDMAKSNLNQATLGGWAAMLQHYFVSAWIPPATDSNTIFSSVSAGGLANIGFRGAVYDIAPGATQEISSQFYVGPKDQKALSAISDTLNLVVDYGFLWWLAVPIHWLLMFYQSFVGNWGMAIILITLTVRGLLFPLTKAQYTSMAKMRNLQPKLTDLKERFGDDRQKMGQAMMELYKKEKVNPMGGCLPIILQMPIFIALYWVLLESFELRHAPFMLWIHDLSVQDPYYILPLLMGVSMFVMQKMQPIAPTMDPMQVKMMQWMPVIFTVFFLWFPAGLVLYWLVGNIVAITQQKIIYAGLAKKGLK.

6 consecutive transmembrane segments (helical) span residues 6–26 (NILL…WQAD), 325–345 (LVVD…LLMF), 349–369 (FVGN…GLLF), 420–440 (GGCL…WVLL), 457–477 (LSVQ…MFVM), and 500–520 (VIFT…WLVG).

This sequence belongs to the OXA1/ALB3/YidC family. Type 1 subfamily. In terms of assembly, interacts with the Sec translocase complex via SecD. Specifically interacts with transmembrane segments of nascent integral membrane proteins during membrane integration.

The protein localises to the cell inner membrane. Its function is as follows. Required for the insertion and/or proper folding and/or complex formation of integral membrane proteins into the membrane. Involved in integration of membrane proteins that insert both dependently and independently of the Sec translocase complex, as well as at least some lipoproteins. Aids folding of multispanning membrane proteins. The polypeptide is Membrane protein insertase YidC (Shewanella baltica (strain OS223)).